Here is a 156-residue protein sequence, read N- to C-terminus: Snaclec A10 (156 aa).

The first 23 residues, 1-23 (MGRSISVSFGLLVVFLSLSGIGA), serve as a signal peptide directing secretion. Disulfide bonds link C27–C38, C55–C154, and C129–C146. The C-type lectin domain maps to 34–155 (YDQHCYQAVD…CGQPYRFTCE (122 aa)).

Belongs to the snaclec family. Heterodimer; disulfide-linked. As to expression, expressed by the venom gland.

The protein localises to the secreted. Its function is as follows. Interferes with one step of hemostasis (modulation of platelet aggregation, or coagulation cascade, for example). This chain is Snaclec A10, found in Macrovipera lebetinus (Levantine viper).